Here is a 211-residue protein sequence, read N- to C-terminus: MSKFQVVEHPLIQHKLSILRRKEASTKEFRELVDEIGMLMAYEVSRDLPLEDVEIETPVQKTTVKQIAGKKLAIVPILRAGIGMVDGILKLIPAARVGHIGMYRDEETLKPVEYLVKLPADIADRQIFLVDPMLATGGSAILAVDSLKKRNAKAENIKFVCLVAAPEGVKALQEAHPDIEIYTAALDEKLNEHGYIVPGLGDAGDRLFGTK.

5-phospho-alpha-D-ribose 1-diphosphate-binding positions include Arg79, Arg104, and Asp131–Ser139. Residues Ile196 and Gly201 to Ala203 each bind uracil. Residue Asp202 participates in 5-phospho-alpha-D-ribose 1-diphosphate binding.

It belongs to the UPRTase family. Mg(2+) is required as a cofactor.

It carries out the reaction UMP + diphosphate = 5-phospho-alpha-D-ribose 1-diphosphate + uracil. It participates in pyrimidine metabolism; UMP biosynthesis via salvage pathway; UMP from uracil: step 1/1. With respect to regulation, allosterically activated by GTP. In terms of biological role, catalyzes the conversion of uracil and 5-phospho-alpha-D-ribose 1-diphosphate (PRPP) to UMP and diphosphate. The sequence is that of Uracil phosphoribosyltransferase from Lactococcus lactis subsp. cremoris (strain MG1363).